Here is a 511-residue protein sequence, read N- to C-terminus: 2'-acyl-2-O-sulfo-trehalose (hydroxy)phthioceranyltransferase PapA1 (511 aa).

This sequence belongs to the PapA acyltransferase family.

It carries out the reaction a (hydroxy)phthioceranyl-[(hydroxy)phthioceranic acid synthase] + 2'-palmitoyl/stearoyl-2-O-sulfo-alpha,alpha-trehalose = a 3'-(hydroxy)phthioceranyl-2'-palmitoyl/stearoyl-2-O-sulfo-alpha,alpha-trehalose + holo-[(hydroxy)phthioceranic acid synthase].. In terms of biological role, required for the biosynthesis of sulfolipid-1 (SL-1), a major mycobacterial cell wall lipid. Catalyzes the acylation of trehalose-2-sulfate-2'-palmitate (SL659) by adding the (hydroxy)phthioceranoyl group at the 3'-position to yield the diacylated intermediate 2-palmitoyl-3-(C43)-phthioceranyl-alpha, alpha'-D-trehalose-2'-sulfate (SL1278). The protein is 2'-acyl-2-O-sulfo-trehalose (hydroxy)phthioceranyltransferase PapA1 (papA1) of Mycobacterium tuberculosis (strain CDC 1551 / Oshkosh).